Consider the following 499-residue polypeptide: Glutamyl-tRNA(Gln) amidotransferase subunit A (499 aa).

Catalysis depends on charge relay system residues Lys79 and Ser159. Ser183 (acyl-ester intermediate) is an active-site residue.

The protein belongs to the amidase family. GatA subfamily. In terms of assembly, heterotrimer of A, B and C subunits.

The enzyme catalyses L-glutamyl-tRNA(Gln) + L-glutamine + ATP + H2O = L-glutaminyl-tRNA(Gln) + L-glutamate + ADP + phosphate + H(+). Its function is as follows. Allows the formation of correctly charged Gln-tRNA(Gln) through the transamidation of misacylated Glu-tRNA(Gln) in organisms which lack glutaminyl-tRNA synthetase. The reaction takes place in the presence of glutamine and ATP through an activated gamma-phospho-Glu-tRNA(Gln). The sequence is that of Glutamyl-tRNA(Gln) amidotransferase subunit A from Granulibacter bethesdensis (strain ATCC BAA-1260 / CGDNIH1).